Here is a 363-residue protein sequence, read N- to C-terminus: MSFSLFRKAPKFWERRGPTSLLLWPLSWLYGLILRARKLIHDLGIVRTKPTPVPIIIVGNIRVGGTGKTPIVIALAKRLSQLGWKPGIISRGYGSSSQTAPLLVRSDSSPSLVGDEPVLIAKRTDNQFPIWVYPKRQQSIQALLKHSPEVDVIISDDGLQHRGLTRWPAREGGRDIEFVVRDSRGEGNRFLLPAGPLREPATRDRDATLFTGNPSFNEKKTGILDEYFLGRRAFSLGTYLGRPYQLIDHANTQSLEQIAEQFLPKSMTAIAGLGNPQRFFDDLAKQGVTCKQIPLPDHAQYTPEFFAKVKAQCLLITEKDAVKCAEISDERIWVVPMSLHLPENFVEWLQSILQRPDPHRYTL.

Residue 62-69 coordinates ATP; the sequence is RVGGTGKT.

The protein belongs to the LpxK family.

It catalyses the reaction a lipid A disaccharide + ATP = a lipid IVA + ADP + H(+). Its pathway is glycolipid biosynthesis; lipid IV(A) biosynthesis; lipid IV(A) from (3R)-3-hydroxytetradecanoyl-[acyl-carrier-protein] and UDP-N-acetyl-alpha-D-glucosamine: step 6/6. Functionally, transfers the gamma-phosphate of ATP to the 4'-position of a tetraacyldisaccharide 1-phosphate intermediate (termed DS-1-P) to form tetraacyldisaccharide 1,4'-bis-phosphate (lipid IVA). This Polynucleobacter asymbioticus (strain DSM 18221 / CIP 109841 / QLW-P1DMWA-1) (Polynucleobacter necessarius subsp. asymbioticus) protein is Tetraacyldisaccharide 4'-kinase.